The primary structure comprises 385 residues: ELAV-like protein 4 (385 aa).

Residues 12–48 are disordered; sequence TMEPQVSNGPTSNTSNGPSSNNRNCPSPMQTGATTDD. Positions 18–33 are enriched in low complexity; sequence SNGPTSNTSNGPSSNN. The segment covering 34-48 has biased composition (polar residues); that stretch reads RNCPSPMQTGATTDD. The residue at position 38 (Ser38) is a Phosphoserine. RRM domains follow at residues 51–129 and 137–217; these read TNLI…YARP and ANLY…FANN. Residue Ser233 is modified to Phosphoserine. Arg248 is subject to Asymmetric dimethylarginine; by CARM1; alternate. An Omega-N-methylarginine; by CARM1; alternate modification is found at Arg248. The RRM 3 domain occupies 302 to 380; the sequence is WCIFVYNLSP…RVLQVSFKTN (79 aa).

It belongs to the RRM elav family. In terms of assembly, component of a TAU mRNP complex, at least composed of IGF2BP1, ELAVL4 and G3BP. Associates with the EIF4F cap-binding complex, composed of EIF4G, EIF4A, EIF4E and PABP. Within the EIF4F cap-binding complex, interacts with EIF4A. Interacts with SMN (via Tudor domain) in an RNA-independent manner; the interaction is required for localization of ELAVL4 to RNA granules. Interacts with MAP1 light chain LC1 (via C-terminus); the interaction contributes to the association of ELAVL4 with microtubules. Interacts with MAP1 light chain LC2. Post-translationally, methylated by CARM1, which leads to reduced RNA-binding activity and enhanced interaction with SMN. Methylation at Arg-248 by CARM1 weakens protective binding to the 3'UTR of CDKN1A mRNA and down-regulates CDKN1A protein expression, thereby maintaining cells in a proliferative state. Methylation is inhibited by NGF, which facilitates neurite outgrowth. Expressed in pancreatic beta cells (at protein level). Expressed in the brain.

The protein localises to the cytoplasm. It is found in the perikaryon. The protein resides in the cell projection. Its subcellular location is the dendrite. It localises to the axon. The protein localises to the growth cone. RNA-binding protein that is involved in the post-transcriptional regulation of mRNAs. Plays a role in the regulation of mRNA stability, alternative splicing and translation. Binds to AU-rich element (ARE) sequences in the 3' untranslated region (UTR) of target mRNAs, including GAP43, VEGF, FOS, CDKN1A and ACHE mRNA. Many of the target mRNAs are coding for RNA-binding proteins, transcription factors and proteins involved in RNA processing and/or neuronal development and function. By binding to the mRNA 3'UTR, decreases mRNA deadenylation and thereby contributes to the stabilization of mRNA molecules and their protection from decay. Also binds to the polyadenylated (poly(A)) tail in the 3'UTR of mRNA, thereby increasing its affinity for mRNA binding. Mainly plays a role in neuron-specific RNA processing by stabilization of mRNAs such as GAP43, ACHE and mRNAs of other neuronal proteins, thereby contributing to the differentiation of neural progenitor cells, nervous system development, learning and memory mechanisms. Involved in the negative regulation of the proliferative activity of neuronal stem cells and in the positive regulation of neuronal differentiation of neural progenitor cells. Promotes neuronal differentiation of neural stem/progenitor cells in the adult subventricular zone of the hippocampus by binding to and stabilizing SATB1 mRNA. Binds and stabilizes MSI1 mRNA in neural stem cells. Exhibits increased binding to ACHE mRNA during neuronal differentiation, thereby stabilizing ACHE mRNA and enhancing its expression. Protects CDKN1A mRNA from decay by binding to its 3'-UTR. May bind to APP and BACE1 mRNAS and the BACE1AS lncRNA and enhance their stabilization. Plays a role in neurite outgrowth and in the establishment and maturation of dendritic arbors, thereby contributing to neocortical and hippocampal circuitry function. Stabilizes GAP43 mRNA and protects it from decay during postembryonic development in the brain. By promoting the stabilization of GAP43 mRNA, plays a role in NGF-mediated neurite outgrowth. Binds to BDNF long 3'UTR mRNA, thereby leading to its stabilization and increased dendritic translation after activation of PKC. By increasing translation of BDNF after nerve injury, may contribute to nerve regeneration. Acts as a stabilizing factor by binding to the 3'UTR of NOVA1 mRNA, thereby increasing its translation and enhancing its functional activity in neuron-specific splicing. Stimulates translation of mRNA in a poly(A)- and cap-dependent manner, possibly by associating with the EIF4F cap-binding complex. May also negatively regulate translation by binding to the 5'UTR of Ins2 mRNA, thereby repressing its translation. Upon glucose stimulation, Ins2 mRNA is released from ELAVL4 and translational inhibition is abolished. Also plays a role in the regulation of alternative splicing. May regulate alternative splicing of CALCA pre-mRNA into Calcitonin and Calcitonin gene-related peptide 1 (CGRP) by competing with splicing regulator TIAR for binding to U-rich intronic sequences of CALCA pre-mRNA. The sequence is that of ELAV-like protein 4 (ELAVL4) from Homo sapiens (Human).